A 302-amino-acid polypeptide reads, in one-letter code: 4-hydroxy-tetrahydrodipicolinate synthase (302 aa).

Thr-55 is a binding site for pyruvate. The Proton donor/acceptor role is filled by Tyr-144. Residue Lys-172 is the Schiff-base intermediate with substrate of the active site. Pyruvate is bound at residue Val-214.

Belongs to the DapA family. In terms of assembly, homotetramer; dimer of dimers.

The protein localises to the cytoplasm. The catalysed reaction is L-aspartate 4-semialdehyde + pyruvate = (2S,4S)-4-hydroxy-2,3,4,5-tetrahydrodipicolinate + H2O + H(+). It participates in amino-acid biosynthesis; L-lysine biosynthesis via DAP pathway; (S)-tetrahydrodipicolinate from L-aspartate: step 3/4. In terms of biological role, catalyzes the condensation of (S)-aspartate-beta-semialdehyde [(S)-ASA] and pyruvate to 4-hydroxy-tetrahydrodipicolinate (HTPA). In Synechococcus sp. (strain CC9605), this protein is 4-hydroxy-tetrahydrodipicolinate synthase.